Consider the following 55-residue polypeptide: Cytochrome b-c1 complex subunit 9 (55 aa).

The Mitochondrial matrix portion of the chain corresponds to 1 to 15 (MKVIYNTLFKRTSTY). A helical transmembrane segment spans residues 16-41 (AVAIIASAFFFERALDVTSVAIFEGI). Residues 42 to 55 (NKGKLWKDIKGKYE) are Chloroplast intermembrane-facing.

Belongs to the UQCR10/QCR9 family. Component of the ubiquinol-cytochrome c oxidoreductase (cytochrome b-c1 complex, complex III, CIII), a multisubunit enzyme composed of 3 respiratory subunits cytochrome b, cytochrome c1 and Rieske protein, 2 core protein subunits, and additional low-molecular weight protein subunits. The complex exists as an obligatory dimer and forms supercomplexes (SCs) in the inner mitochondrial membrane with cytochrome c oxidase (complex IV, CIV).

It is found in the mitochondrion inner membrane. Functionally, component of the ubiquinol-cytochrome c oxidoreductase, a multisubunit transmembrane complex that is part of the mitochondrial electron transport chain which drives oxidative phosphorylation. The respiratory chain contains 3 multisubunit complexes succinate dehydrogenase (complex II, CII), ubiquinol-cytochrome c oxidoreductase (cytochrome b-c1 complex, complex III, CIII) and cytochrome c oxidase (complex IV, CIV), that cooperate to transfer electrons derived from NADH and succinate to molecular oxygen, creating an electrochemical gradient over the inner membrane that drives transmembrane transport and the ATP synthase. The cytochrome b-c1 complex catalyzes electron transfer from ubiquinol to cytochrome c, linking this redox reaction to translocation of protons across the mitochondrial inner membrane, with protons being carried across the membrane as hydrogens on the quinol. In the process called Q cycle, 2 protons are consumed from the matrix, 4 protons are released into the intermembrane space and 2 electrons are passed to cytochrome c. This is Cytochrome b-c1 complex subunit 9 (ox) from Drosophila melanogaster (Fruit fly).